The primary structure comprises 198 residues: Ion-translocating oxidoreductase complex subunit B (198 aa).

The segment at 1-28 (MIITTVYFILVAIAVLALIFGAILGFAS) is hydrophobic. Residues 34 to 92 (EADPIVEKIDALLPQSQCGQCGYPGCKPYAEAIANGDDITKCIPGGQTVIVNIAELMGV) enclose the 4Fe-4S domain. Positions 51, 54, 59, 75, 115, 118, 121, 125, 145, 148, 151, and 155 each coordinate [4Fe-4S] cluster. 4Fe-4S ferredoxin-type domains are found at residues 106–135 (MVAF…GTNK) and 136–165 (AMHT…MIKV).

This sequence belongs to the 4Fe4S bacterial-type ferredoxin family. RnfB subfamily. The complex is composed of six subunits: RnfA, RnfB, RnfC, RnfD, RnfE and RnfG. [4Fe-4S] cluster serves as cofactor.

It is found in the cell inner membrane. Part of a membrane-bound complex that couples electron transfer with translocation of ions across the membrane. This is Ion-translocating oxidoreductase complex subunit B from Pasteurella multocida (strain Pm70).